The chain runs to 128 residues: Sulfurtransferase TusD (128 aa).

Cysteine 78 serves as the catalytic Cysteine persulfide intermediate.

The protein belongs to the DsrE/TusD family. In terms of assembly, heterohexamer, formed by a dimer of trimers. The hexameric TusBCD complex contains 2 copies each of TusB, TusC and TusD. The TusBCD complex interacts with TusE.

It localises to the cytoplasm. Part of a sulfur-relay system required for 2-thiolation of 5-methylaminomethyl-2-thiouridine (mnm(5)s(2)U) at tRNA wobble positions. Accepts sulfur from TusA and transfers it in turn to TusE. This is Sulfurtransferase TusD from Salmonella arizonae (strain ATCC BAA-731 / CDC346-86 / RSK2980).